The sequence spans 138 residues: Putative thioredoxin-like protein 453L (138 aa).

Residues 3 to 138 (QQKYFEKPVY…FNNIVNYVMG (136 aa)) form the Thioredoxin domain. Active-site nucleophile residues include C44 and C47. The cysteines at positions 44 and 47 are disulfide-linked.

It belongs to the thioredoxin family.

In terms of biological role, participates in various redox reactions through the reversible oxidation of its active center dithiol to a disulfide and catalyzes dithiol-disulfide exchange reactions. The polypeptide is Putative thioredoxin-like protein 453L (Acheta domesticus (House cricket)).